A 584-amino-acid polypeptide reads, in one-letter code: Cation channel sperm-associated protein 2 (584 aa).

The Cytoplasmic portion of the chain corresponds to 1-106; it reads MAHERGHLQL…LWAGWVLDSS (106 aa). The chain crosses the membrane as a helical span at residues 107-129; the sequence is IFSNFIISLIFLNTFVLMVEIEL. Residues 130-138 lie on the Extracellular side of the membrane; the sequence is MNSTNTSLW. Residues 139 to 164 traverse the membrane as a helical segment; it reads PLKLALEVTDWFILLSFIVEILLMWL. The Cytoplasmic segment spans residues 165 to 173; the sequence is ASFFLFWKN. The chain crosses the membrane as a helical span at residues 174–198; it reads AWSVFDFVVTMLSLLPEFVVLIGVS. Residues 199 to 201 are Extracellular-facing; it reads ADS. A helical membrane pass occupies residues 202–220; that stretch reads VWLQLLRVSRVLRSLKLFA. The Cytoplasmic segment spans residues 221-237; the sequence is RFPQIKVILLALVRALK. Residues 238–260 form a helical membrane-spanning segment; the sequence is SMTFLLMLLLIFFYVFAVAGVYF. Residues 261-279 are Extracellular-facing; the sequence is FKEYSRSTIENLEYNMFFS. Positions 280–292 form an intramembrane region, helical; Pore-forming; that stretch reads DLLNSLVTVFILF. Residues 293–312 lie on the Extracellular side of the membrane; sequence TLDHWYAVLQDVWKVPEASR. Residues 313-339 traverse the membrane as a helical segment; it reads VFSSIYVILWLLLGSIIFRNIIVAMMV. The Cytoplasmic portion of the chain corresponds to 340-584; the sequence is TNFQNIRNEL…VQALMNFEDK (245 aa). A compositionally biased stretch (polar residues) spans 376–386; the sequence is SESLRGTSQGK. Disordered stretches follow at residues 376–460 and 480–510; these read SESL…KGYT and AGKAENEKVQKELKEKAYPGSPPNSSSHDEA. 2 stretches are compositionally biased toward acidic residues: residues 390–418 and 426–443; these read DITETSEATDEEKSEAEESEEEKSEEEKS and EKNDEEKSDEEENDEEKS. 2 stretches are compositionally biased toward basic and acidic residues: residues 444–460 and 483–496; these read DVEKSDEEKNDEEKGYT and AENEKVQKELKEKA.

The protein belongs to the cation channel sperm-associated (TC 1.A.1.19) family. In terms of assembly, component of the CatSper complex or CatSpermasome composed of the core pore-forming members CATSPER1, CATSPER2, CATSPER3 and CATSPER4 as well as auxiliary members CATSPERB, CATSPERG, CATSPERD, CATSPERE, CATSPERZ, C2CD6/CATSPERT, SLCO6C1, TMEM249, TMEM262 and EFCAB9. HSPA1 may be an additional auxiliary complex member. The core complex members CATSPER1, CATSPER2, CATSPER3 and CATSPER4 form a heterotetrameric channel. The auxiliary CATSPERB, CATSPERG, CATSPERD and CATSPERE subunits form a pavilion-like structure over the pore which stabilizes the complex through interactions with CATSPER4, CATSPER3, CATSPER1 and CATSPER2 respectively. SLCO6C1 interacts with CATSPERE and TMEM262/CATSPERH interacts with CATSPERB, further stabilizing the complex. C2CD6/CATSPERT interacts at least with CATSPERD and is required for targeting the CatSper complex in the flagellar membrane. Interacts with Ca(v)3.3/CACNA1I, leading to suppression of T-type calcium channel activity.

The protein resides in the cell projection. It is found in the cilium. Its subcellular location is the flagellum membrane. The enzyme catalyses Ca(2+)(in) = Ca(2+)(out). Activated by intracellular alkalinization. In terms of biological role, pore-forming subunit of the CatSper complex, a sperm-specific voltage-gated calcium channel that plays a central role in sperm cell hyperactivation. Controls calcium entry to mediate the hyperactivated motility, a step needed for sperm motility which is essential late in the preparation of sperm for fertilization. The polypeptide is Cation channel sperm-associated protein 2 (Catsper2) (Rattus norvegicus (Rat)).